A 598-amino-acid chain; its full sequence is N-acetylmuramoyl-L-alanine amidase (598 aa).

Positions 1 to 31 (MSPGNWKTTMVVRGILLILYGLLLQPEPGTA) are cleaved as a signal peptide. Disordered regions lie at residues 172-194 (SSAHKDTSADVNSADVGTLSPNV) and 212-233 (STGVQVTSPDVQVSSPDTKAKS). Position 261 is a phosphoserine (S261). N-linked (GlcNAc...) asparagine glycosylation is present at N353. Residues 428 to 554 (FLYIHHTYVP…RQLVRTDCPG (127 aa)) enclose the N-acetylmuramoyl-L-alanine amidase domain. H432 is a Zn(2+) binding site. A disulfide bridge connects residues C441 and C447. N507 carries N-linked (GlcNAc...) asparagine glycosylation. 2 residues coordinate Zn(2+): H544 and C552.

Belongs to the N-acetylmuramoyl-L-alanine amidase 2 family. Zn(2+) serves as cofactor.

It is found in the secreted. It localises to the membrane. The catalysed reaction is Hydrolyzes the link between N-acetylmuramoyl residues and L-amino acid residues in certain cell-wall glycopeptides.. Functionally, may play a scavenger role by digesting biologically active peptidoglycan (PGN) into biologically inactive fragments. Has no direct bacteriolytic activity. This Sus scrofa (Pig) protein is N-acetylmuramoyl-L-alanine amidase (PGLYRP2).